A 102-amino-acid polypeptide reads, in one-letter code: RNA-binding protein Hfq (102 aa).

The 60-residue stretch at 9-68 (DPFLNALRRERVPVSIYLVNGIKLQGQIESFDQFVILLKNTVSQMVYKHAISTVVPSRPV) folds into the Sm domain. The interval 63 to 102 (VPSRPVSHHSNNAGGSTSSNYHHGSSAQNTSAQQDSEENE) is disordered. Positions 70 to 96 (HHSNNAGGSTSSNYHHGSSAQNTSAQQ) are enriched in polar residues.

It belongs to the Hfq family. As to quaternary structure, homohexamer.

Its function is as follows. RNA chaperone that binds small regulatory RNA (sRNAs) and mRNAs to facilitate mRNA translational regulation in response to envelope stress, environmental stress and changes in metabolite concentrations. Also binds with high specificity to tRNAs. The sequence is that of RNA-binding protein Hfq from Escherichia coli O17:K52:H18 (strain UMN026 / ExPEC).